Here is a 113-residue protein sequence, read N- to C-terminus: MSQSHLDDLFAYVEERCLWQFFSRTWDREENIEGVLNQVGRLLTGQEPLRGTPQERLFYADALAMANDVRERFPWASQVNKEEIEFLLDGLKSRLVDVTITRSTNRELNHHLY.

As to quaternary structure, hexamer of two alpha, two beta, and two delta chains. Requires iron-sulfur cluster as cofactor. It depends on vanadium cation as a cofactor.

It catalyses the reaction N2 + 8 reduced [2Fe-2S]-[ferredoxin] + 16 ATP + 16 H2O = H2 + 8 oxidized [2Fe-2S]-[ferredoxin] + 2 NH4(+) + 16 ADP + 16 phosphate + 6 H(+). In terms of biological role, the key enzymatic reactions in nitrogen fixation are catalyzed by the nitrogenase complex, which has 2 components: the iron protein (component 2) and a component 1 which is either a molybdenum-iron protein, a vanadium-iron, or an iron-iron protein. The protein is Nitrogenase vanadium-iron protein delta chain (vnfG) of Azotobacter vinelandii.